Reading from the N-terminus, the 329-residue chain is Endochitinase A (329 aa).

A signal peptide spans 1–23 (MRLCKFTALSSLLFSLLLLSASA). Positions 24–65 (EQCGSQAGGARCPSGLCCSKFGWCGNTNDYCGPGNCQSQCPG) constitute a Chitin-binding type-1 domain. 4 disulfide bridges follow: C26/C41, C35/C47, C40/C54, and C59/C63. The residue at position 67 (P67) is a 4-hydroxyproline; partial. P69, P71, P72, and P74 each carry 4-hydroxyproline. P75 is subject to 4-hydroxyproline; partial. Cystine bridges form between C101-C163, C175-C183, and C282-C314. E145 serves as the catalytic Proton donor. A propeptide spans 323-329 (GLLVDTM) (removed in mature form).

The protein belongs to the glycosyl hydrolase 19 family. Chitinase class I subfamily. The 4-hydroxyproline residues are not glycosylated in this plant vacuolar protein.

The protein resides in the vacuole. The catalysed reaction is Random endo-hydrolysis of N-acetyl-beta-D-glucosaminide (1-&gt;4)-beta-linkages in chitin and chitodextrins.. Functionally, defense against chitin-containing fungal pathogens. This is Endochitinase A (CHN48) from Nicotiana tabacum (Common tobacco).